The sequence spans 306 residues: MACNCQLMQDTPLLKFPCPRLILLFVLLIRLSQVSSDVDEQLSKSVKDKVLLPCRYNSPHEDESEDRIYWQKHDKVVLSVIAGKLKVWPEYKNRTLYDNTTYSLIILGLVLSDRGTYSCVVQKKERGTYEVKHLALVKLSIKADFSTPNITESGNPSADTKRITCFASGGFPKPRFSWLENGRELPGINTTISQDPESELYTISSQLDFNTTRNHTIKCLIKYGDAHVSEDFTWEKPPEDPPDSKNTLVLFGAGFGAVITVVVIVVIIKCFCKHRSCFRRNEASRETNNSLTFGPEEALAEQTVFL.

Residues 1-37 (MACNCQLMQDTPLLKFPCPRLILLFVLLIRLSQVSSD) form the signal peptide. Residues 38–135 (VDEQLSKSVK…RGTYEVKHLA (98 aa)) enclose the Ig-like V-type domain. The Extracellular portion of the chain corresponds to 38–246 (VDEQLSKSVK…PPEDPPDSKN (209 aa)). Cysteine 54 and cysteine 119 are oxidised to a cystine. N-linked (GlcNAc...) asparagine glycosylation is found at asparagine 93, asparagine 99, asparagine 149, asparagine 189, asparagine 210, and asparagine 214. The Ig-like C2-type domain occupies 148 to 229 (PNITESGNPS…LIKYGDAHVS (82 aa)). Cysteine 165 and cysteine 219 are joined by a disulfide. The segment at 227–246 (HVSEDFTWEKPPEDPPDSKN) is ig-hinge-like. The helical transmembrane segment at 247-268 (TLVLFGAGFGAVITVVVIVVII) threads the bilayer. The Cytoplasmic segment spans residues 269–306 (KCFCKHRSCFRRNEASRETNNSLTFGPEEALAEQTVFL).

In terms of assembly, homodimer. Interacts with CTLA4; this interaction inhibits T-cell activation. Interacts with PDL1/CD274; this interaction blocks PDL1/PDCD1 binding and thus PDL1 inhibitory function. Interacts with CD28. In terms of tissue distribution, expressed on activated B-cells, gamma interferon stimulated monocytes and non-circulating B-cell malignancies.

The protein localises to the cell membrane. In terms of biological role, costimulatory molecule that belongs to the immunoglobulin superfamily that plays an important role in T-lymphocyte activation. Acts as the primary auxiliary signal augmenting the MHC/TCR signal in naive T-cells together with the CD28 receptor which is constitutively expressed on the cell surface of T-cells. In turn, activates different signaling pathways such as NF-kappa-B or MAPK leading to the production of different cytokines. In addition, CD28/CD80 costimulatory signal stimulates glucose metabolism and ATP synthesis of T-cells by activating the PI3K/Akt signaling pathway. Acts also as a regulator of PDL1/PDCD1 interactions to limit excess engagement of PDL1 and its inhibitory role in immune responses. Expressed on B-cells, plays a critical role in regulating interactions between B-cells and T-cells in both early and late germinal center responses, which are crucial for the generation of effective humoral immune responses. The sequence is that of T-lymphocyte activation antigen CD80 (Cd80) from Mus musculus (Mouse).